We begin with the raw amino-acid sequence, 243 residues long: 3-deoxy-manno-octulosonate cytidylyltransferase (243 aa).

Belongs to the KdsB family.

The protein resides in the cytoplasm. The catalysed reaction is 3-deoxy-alpha-D-manno-oct-2-ulosonate + CTP = CMP-3-deoxy-beta-D-manno-octulosonate + diphosphate. The protein operates within nucleotide-sugar biosynthesis; CMP-3-deoxy-D-manno-octulosonate biosynthesis; CMP-3-deoxy-D-manno-octulosonate from 3-deoxy-D-manno-octulosonate and CTP: step 1/1. Its pathway is bacterial outer membrane biogenesis; lipopolysaccharide biosynthesis. Functionally, activates KDO (a required 8-carbon sugar) for incorporation into bacterial lipopolysaccharide in Gram-negative bacteria. This Helicobacter pylori (strain HPAG1) protein is 3-deoxy-manno-octulosonate cytidylyltransferase.